Here is a 255-residue protein sequence, read N- to C-terminus: Cytosolic Fe-S cluster assembly factor Nubp2 homolog (255 aa).

14–21 contacts ATP; the sequence is GKGGVGKS. Positions 185 and 188 each coordinate [4Fe-4S] cluster.

It belongs to the Mrp/NBP35 ATP-binding proteins family. NUBP2/CFD1 subfamily. In terms of assembly, heterotetramer of 2 Nubp1 and 2 Nubp2 chains. The cofactor is [4Fe-4S] cluster.

It is found in the cytoplasm. In terms of biological role, component of the cytosolic iron-sulfur (Fe/S) protein assembly (CIA) machinery. Required for maturation of extramitochondrial Fe-S proteins. The Nubp1-Nubp2 heterotetramer forms a Fe-S scaffold complex, mediating the de novo assembly of an Fe-S cluster and its transfer to target apoproteins. The sequence is that of Cytosolic Fe-S cluster assembly factor Nubp2 homolog from Drosophila persimilis (Fruit fly).